The chain runs to 230 residues: Fibronectin type III domain-containing protein 4 (230 aa).

Residues 1 to 40 (MPGCLPADSVGTMASLMPLSPYLSPTVLLLVSCDLGFVRA) form the signal peptide. At 41-163 (DRPPSPVNVT…GLDGERPLQT (123 aa)) the chain is on the extracellular side. In terms of domain architecture, Fibronectin type-III spans 43–136 (PPSPVNVTVT…PRVHFRTLKG (94 aa)). Asn48 and Asn143 each carry an N-linked (GlcNAc...) asparagine glycan. A disordered region spans residues 118–156 (GLRGESPPGPRVHFRTLKGSDRLPSNSSSPGDITVEGLD). The helical transmembrane segment at 164-184 (GEVVIIVVVLLMWAAVIGLFC) threads the bilayer. Topologically, residues 185–230 (RQYDIIKDNDSNNNPKEKGKGPEQSPQGRPVGTRQKKSPSINTIDV) are cytoplasmic. Residues 193–205 (NDSNNNPKEKGKG) show a composition bias toward basic and acidic residues. Residues 193–230 (NDSNNNPKEKGKGPEQSPQGRPVGTRQKKSPSINTIDV) are disordered.

The protein localises to the membrane. Its subcellular location is the secreted. Its function is as follows. Has anti-inflammatory properties. In the colon, acts on macrophages to down-regulate inflammation. May suppress osteoclastogenesis and mature osteoclast resorptive function. In white adipose tissue, decreases local inflammation, via interaction with GPR116. Also required for proper systemic glucose tolerance, specifically sensitizing white adipocytes to insulin and promoting glucose uptake. The insulin sensitizing function in adipose tissue is mediated by interaction with ADGRF5/GPR116 and activation of cAMP signaling. The protein is Fibronectin type III domain-containing protein 4 (FNDC4) of Bos taurus (Bovine).